Here is a 559-residue protein sequence, read N- to C-terminus: Urocanate hydratase (559 aa).

Residues 53–54, glutamine 131, 177–179, glutamate 197, arginine 202, 243–244, 264–268, 274–275, and tyrosine 323 contribute to the NAD(+) site; these read GG, GMG, NA, QTSAH, and YL. Residue cysteine 411 is part of the active site. Glycine 493 is a binding site for NAD(+).

Belongs to the urocanase family. Requires NAD(+) as cofactor.

The protein resides in the cytoplasm. It carries out the reaction 4-imidazolone-5-propanoate = trans-urocanate + H2O. It functions in the pathway amino-acid degradation; L-histidine degradation into L-glutamate; N-formimidoyl-L-glutamate from L-histidine: step 2/3. Catalyzes the conversion of urocanate to 4-imidazolone-5-propionate. This Pseudomonas aeruginosa (strain LESB58) protein is Urocanate hydratase.